The chain runs to 131 residues: Peptide methionine sulfoxide reductase MsrB (131 aa).

In terms of domain architecture, MsrB spans 8 to 130 (LEEWRAMLDP…NSVCLDLKPR (123 aa)). Zn(2+) is bound by residues C47, C50, C96, and C99. C119 functions as the Nucleophile in the catalytic mechanism.

This sequence belongs to the MsrB Met sulfoxide reductase family. The cofactor is Zn(2+).

The enzyme catalyses L-methionyl-[protein] + [thioredoxin]-disulfide + H2O = L-methionyl-(R)-S-oxide-[protein] + [thioredoxin]-dithiol. This is Peptide methionine sulfoxide reductase MsrB from Pseudomonas entomophila (strain L48).